Reading from the N-terminus, the 49-residue chain is Astexin-3 (49 aa).

Positions 1–25 (MRTYNRSLPARAGLTDLGKVTTHTK) are excised as a propeptide. Positions 26–34 (GPTPMVGLD) form a cross-link, isoaspartyl glycine isopeptide (Gly-Asp).

Post-translationally, this lasso peptide is hydrolyzed to a linear form by the isopeptidase AtxE2, in vitro. The isopeptidase AtxE2 only recognizes the threaded form (but not the unthreaded form).

The protein localises to the cytoplasm. It is found in the secreted. Shows weak antimicrobial activity against its phylogenetic relative Caulobacter crescentus. Does not show activity against other bacteria tested (E.coli, Vibrio sp, Burkhoderia thailandensis, and Salmonella newport). In Asticcacaulis excentricus (strain ATCC 15261 / DSM 4724 / KCTC 12464 / NCIMB 9791 / VKM B-1370 / CB 48), this protein is Astexin-3.